Here is a 361-residue protein sequence, read N- to C-terminus: mRNA export factor ICP27 homolog (361 aa).

Low complexity predominate over residues 1–15 (MEDSGNSSGSEASRS). Positions 1–107 (MEDSGNSSGS…SESARAAVSA (107 aa)) are disordered. Basic and acidic residues predominate over residues 16–36 (GSEERRPVRERLGSRPPERRP). An RGG-box region spans residues 45-54 (RRRRGGRGGR). A compositionally biased stretch (basic and acidic residues) spans 80 to 99 (RQEADRPDGGPDAPPDRLSE). Residues cysteine 253, histidine 328, cysteine 332, and cysteine 337 each coordinate Zn(2+). The CHC2-type zinc finger occupies 253–337 (CYLRDTPVDE…HKTGCDAPTC (85 aa)).

This sequence belongs to the HHV-1 ICP27 protein family. In terms of assembly, homodimer. Homodimerization is required for transactivation. Associates in a complex with RNA, and host export factors NXF1/TAP and ALYREF; these interactions allow nuclear export of viral transcripts. Interacts with three host shuttling SR proteins SRSF1, SRSF3 and SRSF7. Interacts with host SRPK1. Interacts with IE62; this interaction enhances IE62 transactivation.

The protein resides in the host cytoplasm. It is found in the host nucleus. In terms of biological role, multifunctional regulator of the expression of viral genes that mediates nuclear export of viral intronless mRNAs. This immediate early (EI) protein promotes the nuclear export of viral intronless mRNAs by interacting with mRNAs and host NXF1/TAP. This chain is mRNA export factor ICP27 homolog, found in Suid herpesvirus 1 (strain Kaplan) (SuHV-1).